The primary structure comprises 255 residues: Large ribosomal subunit protein uL4 (255 aa).

It belongs to the universal ribosomal protein uL4 family. In terms of assembly, part of the 50S ribosomal subunit.

In terms of biological role, one of the primary rRNA binding proteins, this protein initially binds near the 5'-end of the 23S rRNA. It is important during the early stages of 50S assembly. It makes multiple contacts with different domains of the 23S rRNA in the assembled 50S subunit and ribosome. Functionally, forms part of the polypeptide exit tunnel. In Pyrococcus abyssi (strain GE5 / Orsay), this protein is Large ribosomal subunit protein uL4.